The sequence spans 200 residues: ADP-ribosylation factor-like protein 4A (200 aa).

Residue Gly-2 is the site of N-myristoyl glycine attachment. Residues 27-34, 75-79, and 134-137 contribute to the GTP site; these read GLDCAGKT, DVGGQ, and NKQD.

The protein belongs to the small GTPase superfamily. Arf family. As to quaternary structure, interacts with CYTH2. Interacts with KPNA2; the interaction is direct. Does not interact with ARL4A. Myristoylated. Expressed strongly in testis and liver. Expressed slightly in heart, spleen, lung and kidney.

The protein resides in the cell membrane. It localises to the cytoplasm. It is found in the nucleus. Its subcellular location is the nucleolus. Small GTP-binding protein which cycles between an inactive GDP-bound and an active GTP-bound form, and the rate of cycling is regulated by guanine nucleotide exchange factors (GEF) and GTPase-activating proteins (GAP). GTP-binding protein that does not act as an allosteric activator of the cholera toxin catalytic subunit. Recruits CYTH1, CYTH2, CYTH3 and CYTH4 to the plasma membrane in GDP-bound form. In Mus musculus (Mouse), this protein is ADP-ribosylation factor-like protein 4A (Arl4a).